A 971-amino-acid polypeptide reads, in one-letter code: Lon protease homolog, mitochondrial (971 aa).

The transit peptide at 1-55 (MYRAGAVLLRGATRTRLLAAASAHQSFATFSQRNQSILMMKSMELAGNSGERRFY) directs the protein to the mitochondrion. The 271-residue stretch at 89-359 (VPMLAINRYP…IALLLIQKEK (271 aa)) folds into the Lon N-terminal domain. A disordered region spans residues 190–255 (TPKNETPLNG…PPSATGEKQK (66 aa)). The segment covering 214 to 224 (LTPPPSPPPLA) has biased composition (pro residues). 512–519 (GPPGVGKT) is an ATP binding site. Residues 718–749 (AEQQNEDEEPAEKATTAITENSEAEPITSTSS) are disordered. A compositionally biased stretch (polar residues) spans 733–749 (TAITENSEAEPITSTSS). The Lon proteolytic domain occupies 784–971 (VTPPGVIMGL…YDELYEHLFQ (188 aa)). Catalysis depends on residues serine 878 and lysine 921.

Belongs to the peptidase S16 family. In terms of assembly, homohexamer or homoheptamer. Organized in a ring with a central cavity.

It localises to the mitochondrion matrix. It carries out the reaction Hydrolysis of proteins in presence of ATP.. In terms of biological role, ATP-dependent serine protease that mediates the selective degradation of misfolded, unassembled or oxidatively damaged polypeptides as well as certain short-lived regulatory proteins in the mitochondrial matrix. May also have a chaperone function in the assembly of inner membrane protein complexes. Participates in the regulation of mitochondrial gene expression and in the maintenance of the integrity of the mitochondrial genome. Binds to mitochondrial DNA in a site-specific manner. Involved in the degradation of transcription factor atfs-1 in the mitochondrion. The sequence is that of Lon protease homolog, mitochondrial from Caenorhabditis elegans.